The following is a 604-amino-acid chain: Glutamine--fructose-6-phosphate aminotransferase [isomerizing] (604 aa).

The Nucleophile; for GATase activity role is filled by Cys-2. A Glutamine amidotransferase type-2 domain is found at 2-218; the sequence is CGIVGVVGNR…DKELVILTKD (217 aa). SIS domains are found at residues 284–423 and 452–594; these read IITS…ANGK and VAEK…VDKP. The active-site For Fru-6P isomerization activity is Lys-599.

Homodimer.

It localises to the cytoplasm. The enzyme catalyses D-fructose 6-phosphate + L-glutamine = D-glucosamine 6-phosphate + L-glutamate. Its function is as follows. Catalyzes the first step in hexosamine metabolism, converting fructose-6P into glucosamine-6P using glutamine as a nitrogen source. The protein is Glutamine--fructose-6-phosphate aminotransferase [isomerizing] of Streptococcus pyogenes serotype M3 (strain ATCC BAA-595 / MGAS315).